The primary structure comprises 340 residues: Glycerol-3-phosphate dehydrogenase [NAD(P)+] (340 aa).

S14, F15, R35, and K108 together coordinate NADPH. The sn-glycerol 3-phosphate site is built by K108 and G136. Residue A140 participates in NADPH binding. 5 residues coordinate sn-glycerol 3-phosphate: K191, D244, S254, R255, and N256. K191 acts as the Proton acceptor in catalysis. Residue R255 coordinates NADPH. E281 is an NADPH binding site.

The protein belongs to the NAD-dependent glycerol-3-phosphate dehydrogenase family.

Its subcellular location is the cytoplasm. The catalysed reaction is sn-glycerol 3-phosphate + NAD(+) = dihydroxyacetone phosphate + NADH + H(+). It catalyses the reaction sn-glycerol 3-phosphate + NADP(+) = dihydroxyacetone phosphate + NADPH + H(+). It functions in the pathway membrane lipid metabolism; glycerophospholipid metabolism. Its function is as follows. Catalyzes the reduction of the glycolytic intermediate dihydroxyacetone phosphate (DHAP) to sn-glycerol 3-phosphate (G3P), the key precursor for phospholipid synthesis. The polypeptide is Glycerol-3-phosphate dehydrogenase [NAD(P)+] (Pseudomonas aeruginosa (strain LESB58)).